We begin with the raw amino-acid sequence, 145 residues long: Ribonuclease H (145 aa).

The region spanning 1–142 is the RNase H type-1 domain; the sequence is MDTPVYLYTD…ADDLANRGAA (142 aa). Mg(2+) is bound by residues aspartate 10, glutamate 48, aspartate 70, and aspartate 134.

This sequence belongs to the RNase H family. As to quaternary structure, monomer. Mg(2+) is required as a cofactor.

It is found in the cytoplasm. It carries out the reaction Endonucleolytic cleavage to 5'-phosphomonoester.. Functionally, endonuclease that specifically degrades the RNA of RNA-DNA hybrids. The protein is Ribonuclease H of Neisseria gonorrhoeae (strain ATCC 700825 / FA 1090).